The chain runs to 674 residues: Pre-mRNA-splicing factor cwf4 (674 aa).

HAT repeat units lie at residues 50 to 82 (EFQG…WELD), 84 to 116 (KEFA…CEMK), 118 to 150 (RNIN…MEEM), 152 to 183 (GNIT…MERR), 185 to 216 (HENE…FEEE), 218 to 253 (GNAA…FEIR), 255 to 289 (KEYE…FEKQ), 299 to 331 (TVLD…LEES), 333 to 367 (GDIN…IWLN), 377 to 413 (KDVD…FELR), 415 to 446 (RKID…FEDA), 448 to 480 (KQFD…LETK), 482 to 516 (GDSD…FEFE), 518 to 549 (MEYG…FEIA), 567 to 608 (TAVV…MHGT), and 610 to 643 (DTRK…YLFP).

Belongs to the crooked-neck family. As to quaternary structure, belongs to the 40S cdc5-associated complex (or cwf complex), a spliceosome sub-complex reminiscent of a late-stage spliceosome composed of the U2, U5 and U6 snRNAs and at least brr2, cdc5, cwf2/prp3, cwf3/syf1, cwf4/syf3, cwf5/ecm2, spp42/cwf6, cwf7/spf27, cwf8, cwf9, cwf10, cwf11, cwf12, prp45/cwf13, cwf14, cwf15, cwf16, cwf17, cwf18, cwf19, cwf20, cwf21, cwf22, cwf23, cwf24, cwf25, cwf26, cyp7/cwf27, cwf28, cwf29/ist3, lea1, msl1, prp5/cwf1, prp10, prp12/sap130, prp17, prp22, sap61, sap62, sap114, sap145, slu7, smb1, smd1, smd3, smf1, smg1 and syf2.

The protein resides in the nucleus. Its function is as follows. Involved in pre-mRNA splicing and cell cycle progression. Required for the spliceosome assembly and initiation of the DNA replication. The sequence is that of Pre-mRNA-splicing factor cwf4 (cwf4) from Schizosaccharomyces pombe (strain 972 / ATCC 24843) (Fission yeast).